The sequence spans 476 residues: Glycogen synthase (476 aa).

Lysine 15 lines the ADP-alpha-D-glucose pocket.

Belongs to the glycosyltransferase 1 family. Bacterial/plant glycogen synthase subfamily.

It carries out the reaction [(1-&gt;4)-alpha-D-glucosyl](n) + ADP-alpha-D-glucose = [(1-&gt;4)-alpha-D-glucosyl](n+1) + ADP + H(+). It functions in the pathway glycan biosynthesis; glycogen biosynthesis. Functionally, synthesizes alpha-1,4-glucan chains using ADP-glucose. The chain is Glycogen synthase from Leptospira biflexa serovar Patoc (strain Patoc 1 / Ames).